Reading from the N-terminus, the 55-residue chain is ATP synthase F(0) complex subunit 8 (55 aa).

Residues 4–24 (LNPSPWLLILLFSWLIFLTML) traverse the membrane as a helical segment. A disordered region spans residues 36-55 (MPSTQNMCKQEPEPWTWPWA).

The protein belongs to the ATPase protein 8 family. In terms of assembly, component of the ATP synthase complex composed at least of ATP5F1A/subunit alpha, ATP5F1B/subunit beta, ATP5MC1/subunit c (homooctomer), MT-ATP6/subunit a, MT-ATP8/subunit 8, ATP5ME/subunit e, ATP5MF/subunit f, ATP5MG/subunit g, ATP5MK/subunit k, ATP5MJ/subunit j, ATP5F1C/subunit gamma, ATP5F1D/subunit delta, ATP5F1E/subunit epsilon, ATP5PF/subunit F6, ATP5PB/subunit b, ATP5PD/subunit d, ATP5PO/subunit OSCP. ATP synthase complex consists of a soluble F(1) head domain (subunits alpha(3) and beta(3)) - the catalytic core - and a membrane F(0) domain - the membrane proton channel (subunits c, a, 8, e, f, g, k and j). These two domains are linked by a central stalk (subunits gamma, delta, and epsilon) rotating inside the F1 region and a stationary peripheral stalk (subunits F6, b, d, and OSCP).

The protein localises to the mitochondrion membrane. Functionally, subunit 8, of the mitochondrial membrane ATP synthase complex (F(1)F(0) ATP synthase or Complex V) that produces ATP from ADP in the presence of a proton gradient across the membrane which is generated by electron transport complexes of the respiratory chain. ATP synthase complex consist of a soluble F(1) head domain - the catalytic core - and a membrane F(1) domain - the membrane proton channel. These two domains are linked by a central stalk rotating inside the F(1) region and a stationary peripheral stalk. During catalysis, ATP synthesis in the catalytic domain of F(1) is coupled via a rotary mechanism of the central stalk subunits to proton translocation. In vivo, can only synthesize ATP although its ATP hydrolase activity can be activated artificially in vitro. Part of the complex F(0) domain. This is ATP synthase F(0) complex subunit 8 from Latimeria chalumnae (Coelacanth).